Consider the following 160-residue polypeptide: SsrA-binding protein (160 aa).

The protein belongs to the SmpB family.

It localises to the cytoplasm. In terms of biological role, required for rescue of stalled ribosomes mediated by trans-translation. Binds to transfer-messenger RNA (tmRNA), required for stable association of tmRNA with ribosomes. tmRNA and SmpB together mimic tRNA shape, replacing the anticodon stem-loop with SmpB. tmRNA is encoded by the ssrA gene; the 2 termini fold to resemble tRNA(Ala) and it encodes a 'tag peptide', a short internal open reading frame. During trans-translation Ala-aminoacylated tmRNA acts like a tRNA, entering the A-site of stalled ribosomes, displacing the stalled mRNA. The ribosome then switches to translate the ORF on the tmRNA; the nascent peptide is terminated with the 'tag peptide' encoded by the tmRNA and targeted for degradation. The ribosome is freed to recommence translation, which seems to be the essential function of trans-translation. In Marinobacter nauticus (strain ATCC 700491 / DSM 11845 / VT8) (Marinobacter aquaeolei), this protein is SsrA-binding protein.